The primary structure comprises 219 residues: 7-cyano-7-deazaguanine synthase (219 aa).

10 to 20 (FSGGQDSTTCL) serves as a coordination point for ATP. Cys-188, Cys-196, Cys-199, and Cys-202 together coordinate Zn(2+).

The protein belongs to the QueC family. It depends on Zn(2+) as a cofactor.

It carries out the reaction 7-carboxy-7-deazaguanine + NH4(+) + ATP = 7-cyano-7-deazaguanine + ADP + phosphate + H2O + H(+). It functions in the pathway purine metabolism; 7-cyano-7-deazaguanine biosynthesis. Its function is as follows. Catalyzes the ATP-dependent conversion of 7-carboxy-7-deazaguanine (CDG) to 7-cyano-7-deazaguanine (preQ(0)). The sequence is that of 7-cyano-7-deazaguanine synthase from Neisseria meningitidis serogroup B (strain ATCC BAA-335 / MC58).